Reading from the N-terminus, the 383-residue chain is Chaperone protein DnaJ (383 aa).

The J domain maps to 6-70 (DYYDVLGVGR…QKRAAYDQYG (65 aa)). The CR-type zinc finger occupies 140-222 (GKETKISYSR…CHGTGREEER (83 aa)). Zn(2+)-binding residues include cysteine 153, cysteine 156, cysteine 170, cysteine 173, cysteine 196, cysteine 199, cysteine 210, and cysteine 213. CXXCXGXG motif repeat units lie at residues 153-160 (CHTCHGSG), 170-177 (CHKCHGAG), 196-203 (CDVCGGTG), and 210-217 (CDTCHGTG).

This sequence belongs to the DnaJ family. In terms of assembly, homodimer. Zn(2+) is required as a cofactor.

The protein resides in the cytoplasm. Functionally, participates actively in the response to hyperosmotic and heat shock by preventing the aggregation of stress-denatured proteins and by disaggregating proteins, also in an autonomous, DnaK-independent fashion. Unfolded proteins bind initially to DnaJ; upon interaction with the DnaJ-bound protein, DnaK hydrolyzes its bound ATP, resulting in the formation of a stable complex. GrpE releases ADP from DnaK; ATP binding to DnaK triggers the release of the substrate protein, thus completing the reaction cycle. Several rounds of ATP-dependent interactions between DnaJ, DnaK and GrpE are required for fully efficient folding. Also involved, together with DnaK and GrpE, in the DNA replication of plasmids through activation of initiation proteins. The protein is Chaperone protein DnaJ of Latilactobacillus sakei subsp. sakei (strain 23K) (Lactobacillus sakei subsp. sakei).